Consider the following 369-residue polypeptide: Chaperone protein DnaJ (369 aa).

The J domain maps to 4–69; it reads SYYEILEVEK…KKRALYDRYG (66 aa). The segment at 130–207 adopts a CR-type zinc-finger fold; sequence GCKKTIKVQY…CKGKTYILKD (78 aa). The Zn(2+) site is built by Cys143, Cys146, Cys159, Cys162, Cys181, Cys184, Cys195, and Cys198. CXXCXGXG motif repeat units follow at residues 143–150, 159–166, 181–188, and 195–202; these read CESCDGTG, CKQCNGQG, CGACQGKG, and CQACKGKT.

Belongs to the DnaJ family. As to quaternary structure, homodimer. Requires Zn(2+) as cofactor.

Its subcellular location is the cytoplasm. In terms of biological role, participates actively in the response to hyperosmotic and heat shock by preventing the aggregation of stress-denatured proteins and by disaggregating proteins, also in an autonomous, DnaK-independent fashion. Unfolded proteins bind initially to DnaJ; upon interaction with the DnaJ-bound protein, DnaK hydrolyzes its bound ATP, resulting in the formation of a stable complex. GrpE releases ADP from DnaK; ATP binding to DnaK triggers the release of the substrate protein, thus completing the reaction cycle. Several rounds of ATP-dependent interactions between DnaJ, DnaK and GrpE are required for fully efficient folding. Also involved, together with DnaK and GrpE, in the DNA replication of plasmids through activation of initiation proteins. The protein is Chaperone protein DnaJ of Helicobacter pylori (strain ATCC 700392 / 26695) (Campylobacter pylori).